Consider the following 476-residue polypeptide: E1B 55 kDa protein (476 aa).

2 disordered regions span residues 1-20 and 42-95; these read MERPNSSVAGLYSGLHGNGS and FGSS…KMEN. Ser-472 and Ser-473 each carry phosphoserine.

This sequence belongs to the adenoviridae E1B 55 kDa protein family. In terms of assembly, interacts with host PML-4 and PML-5; this interaction promotes efficient subnuclear targeting of E1B-55K to PML nuclear bodies. Interacts with E4-ORF3 protein. Interacts with E4-ORF6 protein.

Its subcellular location is the host nucleus. It localises to the host cytoplasm. Functionally, plays a major role to prevent cellular inhibition of viral genome replication. Assembles an SCF-like E3 ubiquitin ligase complex based on the cellular proteins ELOB, ELOC, CUL5 and RBX1, in cooperation with viral E4orf6. This viral RING-type ligase ubiquitinates cellular substrates and targets them to proteasomal degradation: TP53/p53, LIG4, MRE11-RAD50-NBS1 (MRN) complex, ITGA3, DAXX and BLM. E1B-55K probably acts as the substrate-specific adapter of the SCF-like E3 ubiquitin ligase complex. Degradation of host TP53/p53 activity is essential for preventing E1A-induced TP53 accumulation that would otherwise lead to cell apoptosis and growth arrest. E1B-55K also inactivates TP53 transcription-factor activity by binding its transactivation domain. E1B-55K also functions as a SUMO1 E3 ligase for TP53 which causes the latter to be sequestered in promyelocytic leukemia (PML) nuclear bodies thereby contributing to maximal inhibition of TP53 function. The protein is E1B 55 kDa protein of Human adenovirus F serotype 40 (HAdV-40).